A 1164-amino-acid polypeptide reads, in one-letter code: WASH complex subunit 5 (1164 aa).

The protein belongs to the strumpellin family. Probable component of the WASH complex.

The protein is WASH complex subunit 5 of Dictyostelium discoideum (Social amoeba).